The following is a 154-amino-acid chain: MDSTELNRVFQMFDKDGDGKITTKELNESFKNLGIIIPEDELTQIIQKIDVNGDGCVDIEEFGELYKTIMVEDEDEVGEEDMKEAFNVFDRNGDGFITVDELKAVLSSLGLKQGKTLEECRKMIMQVDVDGDGRVNYMEFRQMMKKGRFFSSLS.

4 EF-hand domains span residues 1–36 (MDSTELNRVFQMFDKDGDGKITTKELNESFKNLGII), 37–72 (IPEDELTQIIQKIDVNGDGCVDIEEFGELYKTIMVE), 77–112 (VGEEDMKEAFNVFDRNGDGFITVDELKAVLSSLGLK), and 115–150 (KTLEECRKMIMQVDVDGDGRVNYMEFRQMMKKGRFF). Positions 14, 16, 18, 20, 25, 50, 52, 54, 56, 61, 90, 92, 94, 101, 128, 130, 132, 134, and 139 each coordinate Ca(2+).

It belongs to the calmodulin family.

In terms of biological role, potential calcium sensor. This chain is Calmodulin-like protein 6 (CML6), found in Arabidopsis thaliana (Mouse-ear cress).